A 523-amino-acid polypeptide reads, in one-letter code: UDP-glucuronosyltransferase 3A1 (523 aa).

Positions 1–23 are cleaved as a signal peptide; it reads MAVGRKSLILSLLIQHFVLLHGA. The Extracellular segment spans residues 24–483; the sequence is KILTVCFLGG…YSYQQPLYQQ (460 aa). Residue Asn125 is glycosylated (N-linked (GlcNAc...) asparagine). The helical transmembrane segment at 484 to 504 threads the bilayer; that stretch reads YLLDVFLFVCVCVIGACYLTV. The Cytoplasmic portion of the chain corresponds to 505-523; it reads KLLKMFIQKLCSFRKLKQN.

The protein belongs to the UDP-glycosyltransferase family.

Its subcellular location is the membrane. It catalyses the reaction glucuronate acceptor + UDP-alpha-D-glucuronate = acceptor beta-D-glucuronoside + UDP + H(+). Its function is as follows. UDP-glucuronosyltransferases catalyze phase II biotransformation reactions in which lipophilic substrates are conjugated with glucuronic acid to increase water solubility and enhance excretion. They are of major importance in the conjugation and subsequent elimination of potentially toxic xenobiotics and endogenous compounds. This is UDP-glucuronosyltransferase 3A1 (ugt3a1) from Xenopus laevis (African clawed frog).